We begin with the raw amino-acid sequence, 868 residues long: Spindle and centriole-associated protein 1 (868 aa).

Disordered stretches follow at residues 129–154 (RTGFPNVTMAPGSSRSPAGINQDPGT), 172–201 (DDGGAESTAHSQSEDSESELPNSLSPHSNR), 229–250 (IAAQSQRTPPGSPSSELSAEDQ), and 291–326 (KPLLSKVKRKQDMRALSKQKKNMLSSSTTSADLASS). 2 stretches are compositionally biased toward polar residues: residues 190 to 200 (ELPNSLSPHSN) and 229 to 245 (IAAQSQRTPPGSPSSEL). Position 236 is a phosphothreonine (Thr-236). Ser-240 is modified (phosphoserine). Low complexity predominate over residues 315–326 (SSSTTSADLASS). Residues 381–434 (RYLKESETQLRKEVETRQQLEQMLGDHRELIDALTAEILLLREENGAVQARLQQ) are a coiled coil. Disordered stretches follow at residues 630–664 (PQFVSLSQPPCSSPPSTQQSRNPVFSEEPTVLGDG) and 702–722 (SSGGEHGDGLREPSRQGNASE). Residues 634 to 649 (SLSQPPCSSPPSTQQS) are compositionally biased toward low complexity. Ser-655 is modified (phosphoserine). The segment covering 706–715 (EHGDGLREPS) has biased composition (basic and acidic residues). Residues 736–764 (SSMEERIAELNRQSMEARSKLLQLIEQQK) adopt a coiled-coil conformation. 4 positions are modified to phosphoserine: Ser-772, Ser-773, Ser-776, and Ser-831. The tract at residues 805–868 (SSKCNTVSPV…GWFALSAHLP (64 aa)) is disordered. A compositionally biased stretch (low complexity) spans 812–831 (SPVSGVSSRRSSGAISNSCS).

In terms of assembly, interacts with CEP120.

It is found in the cytoplasm. Its subcellular location is the cytoskeleton. It localises to the microtubule organizing center. The protein localises to the centrosome. The protein resides in the centriole. It is found in the spindle. Regulator required for centriole duplication, for proper bipolar spindle formation and chromosome congression in mitosis. In Rattus norvegicus (Rat), this protein is Spindle and centriole-associated protein 1 (Spice1).